Reading from the N-terminus, the 200-residue chain is MMKSDSVAIDVPESSSVAKRKAPFMANIRDENGGYKKGLAIFDFILRLGAIAAALGAASTMGTSDETLPFFTQFFQFNAGYDDFPTFQFFVIAMAMVAGYLVLSLPFSIVSICRPHAAGPRILLFILDTVALTLNAAAGAAAADIVYLAHNGNQTTNWLAICLQFGDFCREVSGSVVASFASVVILMVLVVMSGLALRRY.

Over 1-37 (MMKSDSVAIDVPESSSVAKRKAPFMANIRDENGGYKK) the chain is Cytoplasmic. The helical transmembrane segment at 38–58 (GLAIFDFILRLGAIAAALGAA) threads the bilayer. The Extracellular segment spans residues 59–88 (STMGTSDETLPFFTQFFQFNAGYDDFPTFQ). The chain crosses the membrane as a helical span at residues 89-109 (FFVIAMAMVAGYLVLSLPFSI). The Cytoplasmic portion of the chain corresponds to 110–121 (VSICRPHAAGPR). The helical transmembrane segment at 122-142 (ILLFILDTVALTLNAAAGAAA) threads the bilayer. At 143–175 (ADIVYLAHNGNQTTNWLAICLQFGDFCREVSGS) the chain is on the extracellular side. N-linked (GlcNAc...) asparagine glycosylation is present at Asn153. Residues 176–196 (VVASFASVVILMVLVVMSGLA) form a helical membrane-spanning segment. At 197–200 (LRRY) the chain is on the cytoplasmic side.

Belongs to the Casparian strip membrane proteins (CASP) family. As to quaternary structure, homodimer and heterodimers.

It is found in the cell membrane. In terms of biological role, regulates membrane-cell wall junctions and localized cell wall deposition. Required for establishment of the Casparian strip membrane domain (CSD) and the subsequent formation of Casparian strips, a cell wall modification of the root endodermis that determines an apoplastic barrier between the intraorganismal apoplasm and the extraorganismal apoplasm and prevents lateral diffusion. This is Casparian strip membrane protein 2 from Ricinus communis (Castor bean).